Here is a 337-residue protein sequence, read N- to C-terminus: ATP-dependent 6-phosphofructokinase (337 aa).

Residue Gly-11 coordinates ATP. An ADP-binding site is contributed by 21–25; sequence RAVVR. ATP contacts are provided by residues 72-73 and 102-105; these read RY and GDGS. Asp-103 contributes to the Mg(2+) binding site. 125–127 provides a ligand contact to substrate; it reads TID. The active-site Proton acceptor is the Asp-127. An ADP-binding site is contributed by Arg-154. Substrate-binding positions include Arg-162 and 169 to 171; that span reads MGR. ADP is bound by residues 185-187, Lys-212, and 214-216; these read GAD and KNH. Residues Glu-223, Arg-245, and 251–254 each bind substrate; that span reads HILR.

This sequence belongs to the phosphofructokinase type A (PFKA) family. ATP-dependent PFK group I subfamily. Prokaryotic clade 'B1' sub-subfamily. As to quaternary structure, homotetramer. The cofactor is Mg(2+).

The protein resides in the cytoplasm. It carries out the reaction beta-D-fructose 6-phosphate + ATP = beta-D-fructose 1,6-bisphosphate + ADP + H(+). Its pathway is carbohydrate degradation; glycolysis; D-glyceraldehyde 3-phosphate and glycerone phosphate from D-glucose: step 3/4. Allosterically activated by ADP and other diphosphonucleosides, and allosterically inhibited by phosphoenolpyruvate. Catalyzes the phosphorylation of D-fructose 6-phosphate to fructose 1,6-bisphosphate by ATP, the first committing step of glycolysis. This is ATP-dependent 6-phosphofructokinase from Streptococcus pyogenes serotype M4 (strain MGAS10750).